The chain runs to 256 residues: Large ribosomal subunit protein uL2 (256 aa).

A disordered region spans residues 208–230 (EHPHGGGNHQHIGKASTVKRGTS).

The protein belongs to the universal ribosomal protein uL2 family. In larvae tissues examined: gut, brain imaginal disk, salivary glands, fat body, muscles, epidermis and trachaea.

The protein resides in the cytoplasm. This Drosophila melanogaster (Fruit fly) protein is Large ribosomal subunit protein uL2 (RpL8).